The chain runs to 227 residues: Fibrillarin-like rRNA/tRNA 2'-O-methyltransferase (227 aa).

Residues 82-83, 100-101, 125-126, and 145-148 contribute to the S-adenosyl-L-methionine site; these read TT, EF, DA, and DVAQ.

The protein belongs to the methyltransferase superfamily. Fibrillarin family. As to quaternary structure, interacts with nop5. Component of box C/D small ribonucleoprotein (sRNP) particles that contain rpl7ae, FlpA and nop5, plus a guide RNA.

Its function is as follows. Involved in pre-rRNA and tRNA processing. Utilizes the methyl donor S-adenosyl-L-methionine to catalyze the site-specific 2'-hydroxyl methylation of ribose moieties in rRNA and tRNA. Site specificity is provided by a guide RNA that base pairs with the substrate. Methylation occurs at a characteristic distance from the sequence involved in base pairing with the guide RNA. The sequence is that of Fibrillarin-like rRNA/tRNA 2'-O-methyltransferase from Methanosarcina mazei (strain ATCC BAA-159 / DSM 3647 / Goe1 / Go1 / JCM 11833 / OCM 88) (Methanosarcina frisia).